The chain runs to 375 residues: Succinyl-diaminopimelate desuccinylase (375 aa).

Residue H66 participates in Zn(2+) binding. The active site involves D68. D99 is a Zn(2+) binding site. Catalysis depends on E133, which acts as the Proton acceptor. Zn(2+) is bound by residues E134, E162, and H348.

It belongs to the peptidase M20A family. DapE subfamily. In terms of assembly, homodimer. The cofactor is Zn(2+). Co(2+) serves as cofactor.

It catalyses the reaction N-succinyl-(2S,6S)-2,6-diaminopimelate + H2O = (2S,6S)-2,6-diaminopimelate + succinate. The protein operates within amino-acid biosynthesis; L-lysine biosynthesis via DAP pathway; LL-2,6-diaminopimelate from (S)-tetrahydrodipicolinate (succinylase route): step 3/3. Its function is as follows. Catalyzes the hydrolysis of N-succinyl-L,L-diaminopimelic acid (SDAP), forming succinate and LL-2,6-diaminopimelate (DAP), an intermediate involved in the bacterial biosynthesis of lysine and meso-diaminopimelic acid, an essential component of bacterial cell walls. This chain is Succinyl-diaminopimelate desuccinylase, found in Methylobacillus flagellatus (strain ATCC 51484 / DSM 6875 / VKM B-1610 / KT).